Consider the following 465-residue polypeptide: 28S rRNA (cytosine-C(5))-methyltransferase (465 aa).

Position 2 is an N-acetylglycine (Gly2). Phosphoserine is present on Ser167. Residues 234–240 (CAAPGNK), Asp258, Arg263, and Asp305 each bind S-adenosyl-L-methionine. The Nucleophile role is filled by Cys359. The interval 430-465 (TPAPQTDAMDPEPLSQVPKRKRRRKAAVGASMQPST) is disordered.

It belongs to the class I-like SAM-binding methyltransferase superfamily. RsmB/NOP family. As to expression, in the hippocampus, specifically expressed in adult hippocampal NG2-positive oligodendrocyte precursor cells (at protein level).

The protein resides in the nucleus. It is found in the nucleolus. It catalyses the reaction a cytidine in 28S rRNA + S-adenosyl-L-methionine = a 5-methylcytidine in 28S rRNA + S-adenosyl-L-homocysteine + H(+). In terms of biological role, S-adenosyl-L-methionine-dependent methyltransferase that specifically methylates the C(5) position of cytosine 3438 (m5C3438) in 28S rRNA. m5C3782 promotes protein translation without affecting ribosome biogenesis and fidelity. Required for corpus callosum and cerebral cortex development. In Mus musculus (Mouse), this protein is 28S rRNA (cytosine-C(5))-methyltransferase.